A 155-amino-acid polypeptide reads, in one-letter code: Regulatory protein RecX (155 aa).

This sequence belongs to the RecX family.

It is found in the cytoplasm. Its function is as follows. Modulates RecA activity. The chain is Regulatory protein RecX from Vibrio campbellii (strain ATCC BAA-1116).